The sequence spans 432 residues: Adenylosuccinate synthetase (432 aa).

Residues 13–19 (GDEGKGK) and 41–43 (GHT) contribute to the GTP site. The active-site Proton acceptor is the Asp14. Residues Asp14 and Gly41 each coordinate Mg(2+). Residues 14–17 (DEGK), 39–42 (NAGH), Thr130, Arg144, Gln225, Thr240, and Arg304 contribute to the IMP site. His42 functions as the Proton donor in the catalytic mechanism. A substrate-binding site is contributed by 300 to 306 (AVTGRPR). GTP-binding positions include Arg306, 332–334 (KLD), and 415–417 (STG).

This sequence belongs to the adenylosuccinate synthetase family. In terms of assembly, homodimer. Mg(2+) is required as a cofactor.

It is found in the cytoplasm. It carries out the reaction IMP + L-aspartate + GTP = N(6)-(1,2-dicarboxyethyl)-AMP + GDP + phosphate + 2 H(+). The protein operates within purine metabolism; AMP biosynthesis via de novo pathway; AMP from IMP: step 1/2. Its function is as follows. Plays an important role in the de novo pathway of purine nucleotide biosynthesis. Catalyzes the first committed step in the biosynthesis of AMP from IMP. This is Adenylosuccinate synthetase from Mannheimia succiniciproducens (strain KCTC 0769BP / MBEL55E).